Consider the following 325-residue polypeptide: mRNA decay factor CTH1 (325 aa).

2 consecutive C3H1-type zinc fingers follow at residues Leu-204–Asn-232 and Asn-242–Asp-270. Positions Ser-284–Asn-306 are disordered. Residues Leu-292–Asn-306 are compositionally biased toward polar residues.

Its function is as follows. Binds to specific AU-rich elements (ARE) in the 3'-untranslated region of target mRNAs and promotes their degradation. In response to iron deficiency, promotes the decay of many mRNAs encoding proteins involved in iron-dependent pathways. Negatively regulates primarily iron-dependent mitochondrial processes including respiration and amino acid biosynthesis. This is mRNA decay factor CTH1 (CTH1) from Saccharomyces cerevisiae (strain ATCC 204508 / S288c) (Baker's yeast).